A 433-amino-acid polypeptide reads, in one-letter code: D-amino acid dehydrogenase (433 aa).

An FAD-binding site is contributed by V3–Y17.

Belongs to the DadA oxidoreductase family. FAD serves as cofactor.

The enzyme catalyses a D-alpha-amino acid + A + H2O = a 2-oxocarboxylate + AH2 + NH4(+). It participates in amino-acid degradation; D-alanine degradation; NH(3) and pyruvate from D-alanine: step 1/1. Oxidative deamination of D-amino acids. This Pseudomonas syringae pv. syringae (strain B728a) protein is D-amino acid dehydrogenase.